Here is a 263-residue protein sequence, read N- to C-terminus: Palmitoyltransferase ZDHHC21 (263 aa).

At 1–4 (MKMR) the chain is on the cytoplasmic side. Residues 5-25 (LHFVVDPMGWFCMSMVFFVWI) traverse the membrane as a helical segment. Residues 26–44 (YNSFLIPKLVLLPHYAEGH) are Extracellular-facing. The helical transmembrane segment at 45–65 (ITAEPVICYYLASLLCFSALF) threads the bilayer. Residues 66-131 (RASTTDPGKL…WINNCVGEDN (66 aa)) are Cytoplasmic-facing. The region spanning 90–140 (ELCNKCNMMRPKRSHHCSRCGHCVRRMDHHCPWINNCVGEDNHWLFLQLCF) is the DHHC domain. The active-site S-palmitoyl cysteine intermediate is Cys-120. The chain crosses the membrane as a helical span at residues 132 to 152 (HWLFLQLCFYTQVLSFYTLVL). The Extracellular portion of the chain corresponds to 153-181 (DFCQYYYFLPLSSVDQADFAVHHELALLR). Residues 182–202 (VSCFMGLIMFGGISSLFYTQV) form a helical membrane-spanning segment. Over 203–263 (KGILTDTTTI…KLNLTIRSHV (61 aa)) the chain is Cytoplasmic.

This sequence belongs to the DHHC palmitoyltransferase family.

It is found in the golgi apparatus membrane. The protein resides in the golgi apparatus. Its subcellular location is the cis-Golgi network membrane. The protein localises to the cell membrane. It carries out the reaction L-cysteinyl-[protein] + hexadecanoyl-CoA = S-hexadecanoyl-L-cysteinyl-[protein] + CoA. Functionally, palmitoyltransferase that catalyzes the addition of palmitate onto various protein substrates. This chain is Palmitoyltransferase ZDHHC21, found in Danio rerio (Zebrafish).